The sequence spans 740 residues: Ion-translocating oxidoreductase complex subunit C (740 aa).

4Fe-4S ferredoxin-type domains follow at residues G369–Y397 and K407–F436. Residues C377, C380, C383, C387, C416, C419, C422, and C426 each contribute to the [4Fe-4S] cluster site. The disordered stretch occupies residues K602–P714. Over residues Q605 to Q615 the composition is skewed to low complexity.

It belongs to the 4Fe4S bacterial-type ferredoxin family. RnfC subfamily. As to quaternary structure, the complex is composed of six subunits: RsxA, RsxB, RsxC, RsxD, RsxE and RsxG. [4Fe-4S] cluster serves as cofactor.

The protein localises to the cell inner membrane. Part of a membrane-bound complex that couples electron transfer with translocation of ions across the membrane. Required to maintain the reduced state of SoxR. This Escherichia coli O17:K52:H18 (strain UMN026 / ExPEC) protein is Ion-translocating oxidoreductase complex subunit C.